The chain runs to 1002 residues: Glutamate receptor ionotropic, NMDA 3B (1002 aa).

An N-terminal signal peptide occupies residues 1–24 (MESVRTLWLSVALALAVGSRVVRG). At 25-574 (HPQPCRVPTR…PIGAFMWPLH (550 aa)) the chain is on the extracellular side. Asn69, Asn212, Asn344, Asn451, and Asn465 each carry an N-linked (GlcNAc...) asparagine glycan. 2 disulfides stabilise this stretch: Cys439–Cys475 and Cys445–Cys476. Ser531, Ser533, and Arg538 together coordinate glycine. The D-serine site is built by Ser533 and Arg538. A helical membrane pass occupies residues 575 to 594 (WSMWVGVFAALHLTALFLTL). Residues 595–615 (YEWRSPYGLTPRGRNRGTVFS) are Cytoplasmic-facing. The segment at residues 616-627 (YSSALNLCYAIL) is an intramembrane region (discontinuously helical). The Cytoplasmic portion of the chain corresponds to 628–641 (FGRTVSSKTPKCPT). The chain crosses the membrane as a helical span at residues 642 to 661 (GRFLMNLWAIFCLLVLSSYT). Topologically, residues 662–832 (ANLAAVMVGD…TLQMGVYHFS (171 aa)) are extracellular. Ser701 is a glycine binding site. 3 residues coordinate D-serine: Ser701, Ala702, and Asp745. Asp745 contributes to the glycine binding site. N-linked (GlcNAc...) asparagine glycosylation occurs at Asn786. The chain crosses the membrane as a helical span at residues 833–848 (GLFVLLCLGLGSALLT). The Cytoplasmic portion of the chain corresponds to 849–1002 (SLGEHVFYRL…RLLHAAPAES (154 aa)). A disordered region spans residues 882–910 (ALNTGPPEGQQERAEQERSGPKDELPATD). Over residues 891 to 906 (QQERAEQERSGPKDEL) the composition is skewed to basic and acidic residues. Residues 944–985 (LCSNGPGLQAELRELELRIEAARERLRSALLRRGELRALLGD) are a coiled coil. Residues 951 to 984 (LQAELRELELRIEAARERLRSALLRRGELRALLG) form an involved in the trafficking and surface expression of NMDARs region.

Belongs to the glutamate-gated ion channel (TC 1.A.10.1) family. NR3B/GRIN3B subfamily. In terms of assembly, forms heterotetrameric channels that contain at least two GluN1 subunits and at least a combination of one GluN2 and one GluN3 subunits (in vitro). Forms heterotetrameric channels composed of two GluN1/zeta subunits (GRIN1), and two identical GluN3 subunits (GRIN3A or GRIN3B) (in vitro). Does not form functional homomeric channels. As to expression, expressed in the hippocampus, the corpus callosum, in the facial and trigeminal nuclei of the brainstem and the ventral horn of the spinal cord.

The protein localises to the cell membrane. It localises to the postsynaptic cell membrane. The enzyme catalyses Ca(2+)(in) = Ca(2+)(out). The catalysed reaction is Na(+)(in) = Na(+)(out). Its activity is regulated as follows. Excitatory glycine receptors are inhibited by D-serine at a concentrion of 100uM. Its function is as follows. Component of a non-conventional N-methyl-D-aspartate (NMDA) receptors (NMDARs) that function as heterotetrameric, ligand-gated cation channels with low calcium permeability and low voltage-dependent block by Mg(2+). Forms glutamatergic receptor complexes with GluN1 and GluN2 subunits which are activated by glycine binding to the GluN1 and GluN3 subunits and L-glutamate binding to GluN2 subunits. Forms excitatory glycinergic receptor complexes with GluN1 alone which are activated by glycine binding to the GluN1 and GluN3 subunits. GluN3B subunit also binds D-serine and, in the absence of glycine, activates glycinergic receptor complexes, but with lower efficacy than glycine. Each GluN3 subunit confers differential attributes to channel properties, including activation, deactivation and desensitization kinetics, pH sensitivity, Ca2(+) permeability, and binding to allosteric modulators. The chain is Glutamate receptor ionotropic, NMDA 3B from Rattus norvegicus (Rat).